A 710-amino-acid chain; its full sequence is Iron-sulfur clusters transporter ATM1, mitochondrial (710 aa).

Residues 1 to 38 (MWLSLPRSGYGSVATLTSKRVLACLTPLRQFSTSPAVS) constitute a mitochondrion transit peptide. Polar residues predominate over residues 35 to 52 (PAVSNANHKNVDNINKSP). The segment at 35-83 (PAVSNANHKNVDNINKSPANDAANNAVEKGDKPTTSPEKLATKAEKSSA) is disordered. Residues 39 to 129 (NANHKNVDNI…PKGKTSVKFR (91 aa)) are Mitochondrial matrix-facing. Residues 130–151 (VLVAVALLVGAKLLNVQVPFFF) traverse the membrane as a helical segment. Residues 130–419 (VLVAVALLVG…LGSVYRDLRQ (290 aa)) form the ABC transmembrane type-1 domain. Residues 152-173 (KEIIDDMNIEWNSATALGVGIT) are Mitochondrial intermembrane-facing. The helical transmembrane segment at 174–197 (ALIFSYGAARFGAVLFGELRNAIF) threads the bilayer. Residues 198–246 (ASVAQKAIKEVATNVFRHLLKLDMAFHLSRQTGGITRAIDRGTKGISFV) lie on the Mitochondrial matrix side of the membrane. The chain crosses the membrane as a helical span at residues 247–270 (LSSMVFHIIPIALEISLVCGILSY). A topological domain (mitochondrial intermembrane) is located at residue Asn271. A helical membrane pass occupies residues 272–292 (FGWKYALVTGATMVSYAIFTI). The Mitochondrial matrix segment spans residues 293–358 (TTTSWRTKFR…ASIKIATSLA (66 aa)). Residues 298–302 (RTKFR) and 361–364 (NSGQ) contribute to the glutathione site. The chain crosses the membrane as a helical span at residues 359 to 377 (FLNSGQNLIFSSALTAMMY). Topologically, residues 378–392 (MTCCGVADGSLTVGD) are mitochondrial intermembrane. A helical transmembrane segment spans residues 393–414 (LVLVNQLVFQLSVPLNFLGSVY). Residue Gly411 coordinates glutathione. The Mitochondrial matrix portion of the chain corresponds to 415-710 (RDLRQSLLDM…AEEKAAKKDV (296 aa)). In terms of domain architecture, ABC transporter spans 453-687 (IRFENVTYGY…DGLYKSMWDA (235 aa)). ATP is bound by residues Tyr462 and 486–497 (GPSGSGKSTILK).

Belongs to the ABC transporter superfamily. ABCB family. Heavy Metal importer (TC 3.A.1.210) subfamily. In terms of assembly, homodimer.

It is found in the mitochondrion inner membrane. In terms of biological role, performs an essential function in the generation of cytoplasmic iron-sulfur proteins by mediating the ATP-dependent export of Fe/S cluster precursors synthesized by NFS1 and other mitochondrial proteins. Hydrolyzes ATP. Binds glutathione and may function by transporting a glutathione-conjugated iron-sulfur compound. The chain is Iron-sulfur clusters transporter ATM1, mitochondrial from Yarrowia lipolytica (strain CLIB 122 / E 150) (Yeast).